A 556-amino-acid chain; its full sequence is uncharacterized protein (556 aa).

5 disordered regions span residues 1–40 (MSNS…TNEN), 80–243 (NTTQ…KQSW), 278–324 (YDSD…SSLP), 363–391 (RTKQ…KFVD), and 422–525 (DSKQ…ENSA). The segment covering 7–25 (NNNNNTNNNNNNNNNNNGN) has biased composition (low complexity). Over residues 30–40 (EEPDDDSTNEN) the composition is skewed to acidic residues. Composition is skewed to low complexity over residues 80–133 (NTTQ…GTRS) and 164–181 (NDNN…NDSN). Positions 182–192 (IVDDDEDEEEF) are enriched in acidic residues. A compositionally biased stretch (low complexity) spans 207 to 226 (STSSPSSTSSPIVSPQTQTS). Polar residues predominate over residues 227 to 243 (KLESSMDVSPSSGKQSW). 3 stretches are compositionally biased toward low complexity: residues 292 to 322 (NNSS…NSSS), 369 to 388 (KVQQ…NNNK), and 425 to 525 (QQNV…ENSA). Residues 528-548 (GSFIKNAVIFIFILLLMVVGF) form a helical membrane-spanning segment.

Its subcellular location is the membrane. This is an uncharacterized protein from Dictyostelium discoideum (Social amoeba).